Here is a 362-residue protein sequence, read N- to C-terminus: Formate dehydrogenase (362 aa).

Residues valine 93 and asparagine 119 each contribute to the substrate site. NAD(+) is bound by residues 174–175, aspartate 195, 230–234, threonine 256, aspartate 282, 311–314, and serine 357; these read RI, PLHAG, and HYSG.

Belongs to the D-isomer specific 2-hydroxyacid dehydrogenase family. FDH subfamily. Homodimer.

It is found in the cytoplasm. The enzyme catalyses formate + NAD(+) = CO2 + NADH. Functionally, catalyzes the NAD(+)-dependent oxidation of formate to carbon dioxide. Formate oxidation is the final step in the methanol oxidation pathway in methylotrophic microorganisms. Has a role in the detoxification of exogenous formate in non-methylotrophic organisms. This is Formate dehydrogenase from Pichia angusta (Yeast).